We begin with the raw amino-acid sequence, 203 residues long: RNA annealing protein YRA2 (203 aa).

Position 1 is an N-acetylmethionine (Met-1). Disordered stretches follow at residues 1-60 (MDKA…REEP) and 134-203 (EIYQ…YMKG). Residues 11–20 (NSHTDSSSNH) are compositionally biased toward polar residues. A compositionally biased stretch (basic and acidic residues) spans 47–60 (SRSKDRLYREREEP). The region spanning 64–138 (KRIRISKIPL…AKIEVEIYQP (75 aa)) is the RRM domain. Composition is skewed to basic residues over residues 139-153 (QRKHSRMNAHNRRKQ) and 163-180 (PGSHYRQRPNRVSKKNKG).

It belongs to the YRA1 family. In terms of assembly, associates with mRNPs. Interacts with YRA1.

It localises to the nucleus. In terms of biological role, involved in export of poly(A) mRNAs from the nucleus. Recruited to the coding sequences as well as poly-A sites of active genes. This Saccharomyces cerevisiae (strain RM11-1a) (Baker's yeast) protein is RNA annealing protein YRA2 (YRA2).